The sequence spans 470 residues: Asparagine--tRNA ligase (470 aa).

Belongs to the class-II aminoacyl-tRNA synthetase family. As to quaternary structure, homodimer.

Its subcellular location is the cytoplasm. It carries out the reaction tRNA(Asn) + L-asparagine + ATP = L-asparaginyl-tRNA(Asn) + AMP + diphosphate + H(+). This Blochmanniella pennsylvanica (strain BPEN) protein is Asparagine--tRNA ligase.